Consider the following 804-residue polypeptide: DNA mismatch repair protein MutS (804 aa).

Residue 614 to 621 (GPNMAGKS) coordinates ATP.

Belongs to the DNA mismatch repair MutS family.

Functionally, this protein is involved in the repair of mismatches in DNA. It is possible that it carries out the mismatch recognition step. This protein has a weak ATPase activity. This Ehrlichia chaffeensis (strain ATCC CRL-10679 / Arkansas) protein is DNA mismatch repair protein MutS.